We begin with the raw amino-acid sequence, 107 residues long: SH3 domain-binding glutamic acid-rich-like protein 2 (107 aa).

Residues 61 to 67 carry the SH3-binding motif; that stretch reads QGNPLPP.

It belongs to the SH3BGR family. Highly expressed in brain, placenta, liver and kidney. Expressed in retina.

The protein localises to the nucleus. The protein is SH3 domain-binding glutamic acid-rich-like protein 2 (SH3BGRL2) of Homo sapiens (Human).